The sequence spans 499 residues: Histidine ammonia-lyase (499 aa).

The segment at residues 142-144 (ASG) is a cross-link (5-imidazolinone (Ala-Gly)). Ser-143 is subject to 2,3-didehydroalanine (Ser).

This sequence belongs to the PAL/histidase family. Post-translationally, contains an active site 4-methylidene-imidazol-5-one (MIO), which is formed autocatalytically by cyclization and dehydration of residues Ala-Ser-Gly.

It is found in the cytoplasm. It carries out the reaction L-histidine = trans-urocanate + NH4(+). The protein operates within amino-acid degradation; L-histidine degradation into L-glutamate; N-formimidoyl-L-glutamate from L-histidine: step 1/3. This is Histidine ammonia-lyase from Staphylococcus saprophyticus subsp. saprophyticus (strain ATCC 15305 / DSM 20229 / NCIMB 8711 / NCTC 7292 / S-41).